A 680-amino-acid chain; its full sequence is SH3 domain-binding protein 1 (680 aa).

Residues 1–11 (MMKRQLHRMRQ) show a composition bias toward basic residues. 2 disordered regions span residues 1–24 (MMKR…TPET) and 160–184 (SQAA…HTTT). Positions 1–275 (MMKRQLHRMR…TAAPFSRVYG (275 aa)) are interaction with CGNL1. One can recognise a BAR domain in the interval 81–262 (MAESFKELDP…RDNHSQADHS (182 aa)). Over residues 160–169 (SQAAKNSGSN) the composition is skewed to polar residues. Residues S241 and S262 each carry the phosphoserine modification. The region spanning 276-469 (VSLRTHLQDL…ALIQNADTLF (194 aa)) is the Rho-GAP domain. The segment at 470–680 (PGDINFNVSG…RPRGLISETE (211 aa)) is interaction with CD2AP. The segment at 488–680 (EKVSSQQVSE…RPRGLISETE (193 aa)) is disordered. Residues 502-516 (VTVPAPATTPAPTPA) are compositionally biased toward pro residues. S535 is subject to Phosphoserine. Polar residues predominate over residues 536–546 (PKVSRNPTETA). The segment covering 561 to 571 (PARPTMPPPQP) has biased composition (pro residues). S582 carries the phosphoserine modification. At T592 the chain carries Phosphothreonine. An SH3-binding motif is present at residues 607 to 616 (APTMPPPLPP). The span at 609-621 (TMPPPLPPVPPQP) shows a compositional bias: pro residues. S632 is subject to Phosphoserine. Residues 660-671 (HPPPPALPPQPR) show a composition bias toward pro residues.

In terms of assembly, interacts with RAC1. Interacts with the exocyst via EXOC4 and EXOC8; required for the localization of both SH3BP1 and the exocyst to the leading edge of migrating cells. Interacts with CD2AP and CGNL1; probably part of a complex at cell junctions. Interacts with CAPZA1; recruits CAPZA1 to forming cell junctions. May interact with AFDN. Interacts with PLXND1; they dissociate upon SEMA3E binding to PLXND1 allowing SH3BP1 to transduce downstream signal through RAC1 inactivation. Interacts with ABL1, GRB2 and SRC (via SH3 domain). Expressed in all tissues examined. Highest levels found in spleen and brain, lowest in heart and liver.

The protein localises to the cell projection. It is found in the cell junction. The protein resides in the tight junction. Its subcellular location is the adherens junction. It localises to the phagocytic cup. The protein localises to the nucleus. It is found in the cytoplasm. The protein resides in the cytosol. Functionally, GTPase activating protein (GAP) which specifically converts GTP-bound Rho-type GTPases including RAC1 and CDC42 in their inactive GDP-bound form. By specifically inactivating RAC1 at the leading edge of migrating cells, it regulates the spatiotemporal organization of cell protrusions which is important for proper cell migration. Also negatively regulates CDC42 in the process of actin remodeling and the formation of epithelial cell junctions. Through its GAP activity toward RAC1 and/or CDC42 plays a specific role in phagocytosis of large particles. Specifically recruited by a PI3 kinase/PI3K-dependent mechanism to sites of large particles engagement, inactivates RAC1 and/or CDC42 allowing the reorganization of the underlying actin cytoskeleton required for engulfment. It also plays a role in angiogenesis and the process of repulsive guidance as part of a semaphorin-plexin signaling pathway. Following the binding of PLXND1 to extracellular SEMA3E it dissociates from PLXND1 and inactivates RAC1, inducing the intracellular reorganization of the actin cytoskeleton and the collapse of cells. The sequence is that of SH3 domain-binding protein 1 from Mus musculus (Mouse).